The following is a 720-amino-acid chain: MSASDLTSVQAAAPQGDRQILVTSALPYANGQIHIGHLVEYIQTDIWVRTLRMHGHEVYYIGADDTHGTPIMLRAEKEGLTPKQLIDRVWTEHKRDFDSFGVSFDNFYSTDSDENRVLSEKIYVALQDAGFIAEREIEQAYDPVKEMFLPDRFIKGECPKCHAKDQYGDNCEVCGSTYLPTELLNPYSVVSGATPVRKTSKHYFFRLSDPRCETFLREWVSGLAQPEATNKMREWLGDAGEAKLADWDISRDAPYFGFEIPGAPGKYFYVWLDAPVGYYASFKNLCDRNGVDFDAWVRPGSTTEQYHFIGKDILYFHTLFWPAMLEFSGHRTPTNVFAHGFLTVDGAKMSKSRGTFITAQSYIDTGLNPEWLRYYFAAKLNATMEDIDLNLDDFQARVNSDLVGKYVNIASRAAGFLIKRFDGRVQDSAMNHPLVAKLREAIPQIAAHYEAREYGRALRHTMELADEVNAYVDGAKPWDLAKDPANAVALHETCSVSLESFRLLSLALKPVMPRVAEAVESFFGIAPLAWSDAAKPLSSEQPIKAYQHLMTRVDPKQIEALLAANRDSLQAEATGAAVATANAAKDAKNSAKANANAKQAVVNGADDAPISIDDFAKIDLRIAKIVACQAVEGSDKLLQLTLDVGEEKTRNVFSGIKSAYQPEQLVGKLTVMVANLAPRKMKFGLSEGMVLAASATDEKAEPGLYILEPHSGAKPGMRVK.

Residues 27-37 carry the 'HIGH' region motif; sequence PYANGQIHIGH. Zn(2+)-binding residues include cysteine 158, cysteine 161, cysteine 171, and cysteine 174. Residues 348-352 carry the 'KMSKS' region motif; the sequence is KMSKS. Lysine 351 is an ATP binding site. The 107-residue stretch at 614 to 720 folds into the tRNA-binding domain; sequence DFAKIDLRIA…SGAKPGMRVK (107 aa).

The protein belongs to the class-I aminoacyl-tRNA synthetase family. MetG type 1 subfamily. Homodimer. It depends on Zn(2+) as a cofactor.

It localises to the cytoplasm. The enzyme catalyses tRNA(Met) + L-methionine + ATP = L-methionyl-tRNA(Met) + AMP + diphosphate. Its function is as follows. Is required not only for elongation of protein synthesis but also for the initiation of all mRNA translation through initiator tRNA(fMet) aminoacylation. The chain is Methionine--tRNA ligase from Burkholderia lata (strain ATCC 17760 / DSM 23089 / LMG 22485 / NCIMB 9086 / R18194 / 383).